Consider the following 284-residue polypeptide: Diaminopimelate epimerase (284 aa).

Substrate is bound by residues N20, Q53, and N73. The active-site Proton donor is the C82. Substrate contacts are provided by residues 83-84, N167, N200, and 218-219; these read GN and ER. C227 (proton acceptor) is an active-site residue. 228 to 229 contacts substrate; the sequence is GS.

This sequence belongs to the diaminopimelate epimerase family. Homodimer.

It localises to the cytoplasm. It carries out the reaction (2S,6S)-2,6-diaminopimelate = meso-2,6-diaminopimelate. It functions in the pathway amino-acid biosynthesis; L-lysine biosynthesis via DAP pathway; DL-2,6-diaminopimelate from LL-2,6-diaminopimelate: step 1/1. Catalyzes the stereoinversion of LL-2,6-diaminopimelate (L,L-DAP) to meso-diaminopimelate (meso-DAP), a precursor of L-lysine and an essential component of the bacterial peptidoglycan. This chain is Diaminopimelate epimerase, found in Xanthomonas oryzae pv. oryzae (strain MAFF 311018).